Reading from the N-terminus, the 407-residue chain is Serine/threonine transporter SstT (407 aa).

9 consecutive transmembrane segments (helical) span residues 11-31, 43-63, 82-102, 141-161, 192-212, 216-236, 298-318, 339-359, and 363-383; these read IIHGSLVLQIIVGIALAVILA, FLGDFFVGALKAIAPILVFVL, IISLYLIGTFAAALTAVLLSF, ALMTGNYIGILAWGIGLGIAL, LGIFGLVAGTVAATGFDALAG, LLMVLVGAMLIMALVVNPLIV, MGGAAITITVLTLAAAHTLGV, ASGVAGGSLLLIPLACSLFGI, and IAMQVVAVGFIIGVVQDSAET.

It belongs to the dicarboxylate/amino acid:cation symporter (DAACS) (TC 2.A.23) family.

The protein resides in the cell inner membrane. It carries out the reaction L-serine(in) + Na(+)(in) = L-serine(out) + Na(+)(out). The enzyme catalyses L-threonine(in) + Na(+)(in) = L-threonine(out) + Na(+)(out). Involved in the import of serine and threonine into the cell, with the concomitant import of sodium (symport system). This is Serine/threonine transporter SstT from Shewanella denitrificans (strain OS217 / ATCC BAA-1090 / DSM 15013).